A 666-amino-acid chain; its full sequence is L-aspartate N-monooxygenase (nitrosuccinate-forming) (666 aa).

The tract at residues 645–666 (LPAYEDPGVRCPSDDRLTEVTA) is disordered. Residues 656-666 (PSDDRLTEVTA) show a composition bias toward basic and acidic residues.

The protein belongs to the nitrosuccinic acid synthase family. Requires FAD as cofactor.

It catalyses the reaction L-aspartate + 3 NADPH + 3 O2 + 2 H(+) = 2-nitrobutanedioate + 3 NADP(+) + 4 H2O. It functions in the pathway antibiotic biosynthesis. In terms of biological role, part of a gene cluster involved in the biosynthesis of cremeomycin, a light-sensitive o-diazoquinone with antibacterial and antiproliferative effects. Catalyzes the iterative oxidation of L-aspartic acid to nitrosuccinic acid (2-nitrobutanedioate) via N-hydroxyaspartic acid and nitrososuccinic acid. This chain is L-aspartate N-monooxygenase (nitrosuccinate-forming), found in Streptomyces cremeus.